We begin with the raw amino-acid sequence, 1133 residues long: uncharacterized protein (1133 aa).

Disordered stretches follow at residues 33 to 83 (QFED…NSSS), 305 to 629 (PVSN…NSNS), 679 to 723 (GKLD…SVKR), and 736 to 817 (IESP…SEEV). The segment covering 39–83 (NNNNSNNNNNNNNSNNNNSNNNENINRKTGSTLLSSSTSQLNSSS) has biased composition (low complexity). A DNA-binding region (NDT80) is located at residues 40–308 (NNNSNNNNNN…GHPTCNPVSN (269 aa)). Over residues 305-316 (PVSNNPSTPGTP) the composition is skewed to polar residues. A compositionally biased stretch (low complexity) spans 317-384 (ISNFDSSNNN…NNNSSGNSSS (68 aa)). The span at 401-417 (INSLSNHNSPHLTPIQY) shows a compositional bias: polar residues. The span at 418–452 (NNNNNNSNNNSNNNNNNNNNNNNSNNNNNNSNNNN) shows a compositional bias: low complexity. The span at 453–470 (HQFQSNNRIFKGNLSNPF) shows a compositional bias: polar residues. Low complexity-rich tracts occupy residues 473 to 615 (NYSQ…GNNS) and 686 to 714 (NNSNNNSSNNNNSNNNSSNNNSNNNNNNN). Residues 736-747 (IESPQSYISSPT) show a composition bias toward polar residues. The span at 757-771 (QPQPQPQPQPQPQPQ) shows a compositional bias: pro residues. Positions 772–808 (PQSQSQSQSQSQSQSQSQSQSQSQPIQQIVQQQLSSP) are enriched in low complexity. Residues 909–1020 (SDKRVKENVK…KKVDNVCMEL (112 aa)) form the Peptidase S74 domain. A helical transmembrane segment spans residues 1055–1075 (IFIGIGVFTLFVIFGLVAVSI). The tract at residues 1107-1133 (SGSNSCYDSSSNSAIDTTTSTGSGSIK) is disordered.

Its subcellular location is the membrane. This is an uncharacterized protein from Dictyostelium discoideum (Social amoeba).